A 257-amino-acid chain; its full sequence is Snake venom serine protease nikobin (257 aa).

The first 18 residues, 1–18 (MVLIRVLANLLLLQLSYA), serve as a signal peptide directing secretion. A propeptide spanning residues 19–24 (QKSSEL) is cleaved from the precursor. Positions 25-248 (VIGGDECNIN…YSDWIQSIIA (224 aa)) constitute a Peptidase S1 domain. Cystine bridges form between cysteine 31–cysteine 162, cysteine 49–cysteine 65, cysteine 97–cysteine 255, cysteine 141–cysteine 209, cysteine 173–cysteine 188, and cysteine 199–cysteine 224. Residues histidine 64 and aspartate 109 each act as charge relay system in the active site. Asparagine 120 and asparagine 121 each carry an N-linked (GlcNAc...) asparagine glycan. Catalysis depends on serine 203, which acts as the Charge relay system. Asparagine 250 carries an N-linked (GlcNAc...) asparagine glycan.

It belongs to the peptidase S1 family. Snake venom subfamily. Monomer. Expressed by the venom gland.

The protein resides in the secreted. Snake venom serine protease that may act in the hemostasis system of the prey. The protein is Snake venom serine protease nikobin (sp-VN) of Vipera nikolskii (Nikolsky's adder).